Consider the following 298-residue polypeptide: Acidic endochitinase (298 aa).

A signal peptide spans 1 to 29 (MKPNMACLKQVSALLLPLLFISFFKPSHA). The GH18 domain maps to 30–298 (GGISVYWGQN…GYSGAIIGSV (269 aa)). 2 disulfide bridges follow: Cys49/Cys96 and Cys79/Cys86. Glu156 acts as the Proton donor in catalysis. Residues Cys185 and Cys214 are joined by a disulfide bond.

The protein belongs to the glycosyl hydrolase 18 family. Chitinase class II subfamily.

It is found in the secreted. The protein resides in the extracellular space. It carries out the reaction Random endo-hydrolysis of N-acetyl-beta-D-glucosaminide (1-&gt;4)-beta-linkages in chitin and chitodextrins.. This protein functions as a defense against chitin containing fungal pathogens. The polypeptide is Acidic endochitinase (Phaseolus angularis (Azuki bean)).